The primary structure comprises 238 residues: Glyceraldehyde 3-phosphate phosphatase (238 aa).

It belongs to the HAD-like hydrolase superfamily. The cofactor is Mg(2+).

Functionally, catalyzes the dephosphorylation of D,L-glyceraldehyde 3-phosphate in vitro. The chain is Glyceraldehyde 3-phosphate phosphatase from Pyrococcus abyssi (strain GE5 / Orsay).